The chain runs to 257 residues: Asnovolin H dehydrogenase nvfC (257 aa).

Residues 7–26 form a helical membrane-spanning segment; that stretch reads YVLIITGSASGIGLATATIA. Ile-11 serves as a coordination point for NADP(+). N-linked (GlcNAc...) asparagine glycans are attached at residues Asn-57, Asn-92, and Asn-110. Residues Arg-119, Tyr-151, Lys-155, and Val-184 each coordinate NADP(+). The Proton donor role is filled by Tyr-151. Lys-155 acts as the Lowers pKa of active site Tyr in catalysis.

Belongs to the short-chain dehydrogenases/reductases (SDR) family.

The protein localises to the membrane. The enzyme catalyses asnovolin H + A = chermesin D + AH2. The protein operates within secondary metabolite biosynthesis; terpenoid biosynthesis. In terms of biological role, short chain dehydrogenase; part of the gene cluster that mediates the biosynthesis of novofumigatonin, a heavily oxygenated meroterpenoid containing a unique orthoester moiety. The first step of the pathway is the synthesis of 3,5-dimethylorsellinic acid (DMOA) by the polyketide synthase nvfA via condensation of one acetyl-CoA starter unit with 3 malonyl-CoA units and 2 methylations. DMOA is then converted to farnesyl-DMOA by the farnesyltransferase nvfB. Epoxydation by FAD-dependent monooxygenase nvfK, followed by a protonation-initiated cyclization catalyzed by the terpene cyclase nvfL leads to the production of asnavolin H. The short chain dehydrogenase nvfC then as a 3-OH dehydrogenase of asnovolin H to yield chemesin D. There are two branches to synthesize asnovolin A from chemesin D. In one branch, chemesin D undergoes Baeyer-Villiger oxidation by nvfH, methylation by nvfJ, and enoyl reduction by the nvfM D enoylreductase that reduces the double bond between C-5'and C-6', to form respectively asnovolin I, asnovolin K, and asnovolin A. In the other branch, the methylation precedes the Baeyer-Villiger oxidation and the enoyl reduction to yield asnovolin A via the asnovolin J intermediate. Asnovolin A is further converted to fumigatonoid A by the Fe(II)/2-oxoglutarate-dependent dioxygenase nvfI that catalyzes an endoperoxidation reaction. The alpha/beta hydrolase nvfD then acts as an epimerase that converts fumigatonoid A to its C-5' epimer, which then undergoes spontaneous or nvfD-catalyzed lactonization. The following step utilizes the ketoreductase nvfG to produce fumigatonoid B. The dioxygenase nvfE further converts fumigatonoid B into fumigatonoid C. Finally the Fe(II)/2-oxoglutarate-dependent dioxygenase nvfF catalyzes two rounds of oxidation to transform fumigatonoid C into the end product, novofumigatonin A. This chain is Asnovolin H dehydrogenase nvfC, found in Aspergillus novofumigatus (strain IBT 16806).